The primary structure comprises 202 residues: Imidazoleglycerol-phosphate dehydratase (202 aa).

This sequence belongs to the imidazoleglycerol-phosphate dehydratase family.

Its subcellular location is the cytoplasm. It catalyses the reaction D-erythro-1-(imidazol-4-yl)glycerol 3-phosphate = 3-(imidazol-4-yl)-2-oxopropyl phosphate + H2O. Its pathway is amino-acid biosynthesis; L-histidine biosynthesis; L-histidine from 5-phospho-alpha-D-ribose 1-diphosphate: step 6/9. This is Imidazoleglycerol-phosphate dehydratase from Synechococcus sp. (strain CC9605).